Consider the following 285-residue polypeptide: Heterogeneous nuclear ribonucleoprotein A/B (285 aa).

The interval 1-65 (MSDAAEEQPM…NQNGAEGDQI (65 aa)) is disordered. The span at 25–43 (EGEAPVEPSAAAAAPAASA) shows a compositional bias: low complexity. 2 consecutive RRM domains span residues 75-158 (GKMF…KDPV) and 159-238 (KKIF…QPKE). At S87 the chain carries Phosphoserine. Residues K136 and K208 each participate in a glycyl lysine isopeptide (Lys-Gly) (interchain with G-Cter in SUMO2) cross-link. Residue K220 is modified to N6-acetyllysine. The disordered stretch occupies residues 239 to 285 (VYQQQQYGSGGRGNRNRGNRGSGGGQGSTNYGKSQRRGGHQNNYKPY). The residue at position 247 (S247) is a Phosphoserine. R250 carries the post-translational modification Dimethylated arginine; alternate. At R250 the chain carries Omega-N-methylarginine; alternate. An omega-N-methylarginine mark is found at R255 and R258. Residue K271 is modified to N6-acetyllysine. R275 is modified (dimethylated arginine; alternate). R275 carries the omega-N-methylarginine; alternate modification. Asymmetric dimethylarginine; alternate is present on R275.

In terms of assembly, identified in a IGF2BP1-dependent mRNP granule complex containing untranslated mRNAs. Interacts with APOBEC1. Ubiquitous.

The protein resides in the nucleus. The protein localises to the cytoplasm. In terms of biological role, transcriptional repressor. Binds to CArG box motifs, single-stranded and double-stranded DNA, and RNA. It may be that repression by CBF-A is a result of competitive binding of CBF, a putative positive factor, and CBF-A to the same or overlapping motifs around the CArG boxes. The chain is Heterogeneous nuclear ribonucleoprotein A/B (Hnrnpab) from Mus musculus (Mouse).